Consider the following 207-residue polypeptide: Small ribosomal subunit protein uS4 (207 aa).

Residues 31–55 (KCKLDSKPGQHGRTSGARTSDYGTQ) are disordered. The span at 42–53 (GRTSGARTSDYG) shows a compositional bias: polar residues. An S4 RNA-binding domain is found at 97–157 (SRLDNVVYRM…EQKKKQARIL (61 aa)).

It belongs to the universal ribosomal protein uS4 family. Part of the 30S ribosomal subunit. Contacts protein S5. The interaction surface between S4 and S5 is involved in control of translational fidelity.

Functionally, one of the primary rRNA binding proteins, it binds directly to 16S rRNA where it nucleates assembly of the body of the 30S subunit. Its function is as follows. With S5 and S12 plays an important role in translational accuracy. This is Small ribosomal subunit protein uS4 from Paraburkholderia xenovorans (strain LB400).